Reading from the N-terminus, the 167-residue chain is Lipoprotein signal peptidase (167 aa).

A run of 3 helical transmembrane segments spans residues 12–32, 68–88, and 99–119; these read WLWLAVLAFVLDQASKLAVVK, WQRWFFAVLAFAICGLLIHWL, and GIAYSLIIGGALGNVFDRLVL. Residues Asp-124 and Asp-142 contribute to the active site. The chain crosses the membrane as a helical span at residues 137-157; it reads AFNLADSFIFIGAAMIVLDGF.

The protein belongs to the peptidase A8 family.

Its subcellular location is the cell inner membrane. The catalysed reaction is Release of signal peptides from bacterial membrane prolipoproteins. Hydrolyzes -Xaa-Yaa-Zaa-|-(S,diacylglyceryl)Cys-, in which Xaa is hydrophobic (preferably Leu), and Yaa (Ala or Ser) and Zaa (Gly or Ala) have small, neutral side chains.. It participates in protein modification; lipoprotein biosynthesis (signal peptide cleavage). Its function is as follows. This protein specifically catalyzes the removal of signal peptides from prolipoproteins. This chain is Lipoprotein signal peptidase, found in Aeromonas hydrophila subsp. hydrophila (strain ATCC 7966 / DSM 30187 / BCRC 13018 / CCUG 14551 / JCM 1027 / KCTC 2358 / NCIMB 9240 / NCTC 8049).